The chain runs to 250 residues: Aliphatic sulfonates import ATP-binding protein SsuB 2 (250 aa).

The ABC transporter domain maps to 13–229; that stretch reads VRLQGLTRSF…SYRDPLLGEY (217 aa). Residue 45–52 participates in ATP binding; that stretch reads GHSGSGKS.

The protein belongs to the ABC transporter superfamily. Aliphatic sulfonates importer (TC 3.A.1.17.2) family. As to quaternary structure, the complex is composed of two ATP-binding proteins (SsuB), two transmembrane proteins (SsuC) and a solute-binding protein (SsuA).

The protein localises to the cell membrane. It carries out the reaction ATP + H2O + aliphatic sulfonate-[sulfonate-binding protein]Side 1 = ADP + phosphate + aliphatic sulfonateSide 2 + [sulfonate-binding protein]Side 1.. Functionally, part of the ABC transporter complex SsuABC involved in aliphatic sulfonates import. Responsible for energy coupling to the transport system. The polypeptide is Aliphatic sulfonates import ATP-binding protein SsuB 2 (Streptomyces avermitilis (strain ATCC 31267 / DSM 46492 / JCM 5070 / NBRC 14893 / NCIMB 12804 / NRRL 8165 / MA-4680)).